The following is a 172-amino-acid chain: L-methionine sulfoximine/L-methionine sulfone acetyltransferase (172 aa).

One can recognise an N-acetyltransferase domain in the interval alanine 3–aspartate 166. Residues arginine 75–phenylalanine 77 and glutamate 85–serine 87 contribute to the substrate site. Acetyl-CoA contacts are provided by residues valine 88 to valine 90, glycine 96 to valine 101, and asparagine 127.

In terms of assembly, homodimer.

It carries out the reaction L-methionine sulfoximine + acetyl-CoA = N-acetyl-L-methionine sulfoximine + CoA + H(+). It catalyses the reaction L-methionine sulfone + acetyl-CoA = N-acetyl-L-methionine sulfone + CoA + H(+). Its function is as follows. Plays a role in the resistance against the toxic effects of L-methionine sulfoximine (MSX), a rare amino acid, which inhibits glutamine synthetase (GlnA). Catalyzes the acetylation of L-methionine sulfoximine (MSX). This chain is L-methionine sulfoximine/L-methionine sulfone acetyltransferase, found in Pseudomonas aeruginosa (strain ATCC 15692 / DSM 22644 / CIP 104116 / JCM 14847 / LMG 12228 / 1C / PRS 101 / PAO1).